Reading from the N-terminus, the 326-residue chain is Beta-ketoacyl-[acyl-carrier-protein] synthase III (326 aa).

Active-site residues include Cys120 and His253. Residues 254–258 are ACP-binding; the sequence is QANIR. The active site involves Asn283.

Belongs to the thiolase-like superfamily. FabH family. Homodimer.

The protein resides in the cytoplasm. The catalysed reaction is malonyl-[ACP] + acetyl-CoA + H(+) = 3-oxobutanoyl-[ACP] + CO2 + CoA. It participates in lipid metabolism; fatty acid biosynthesis. Catalyzes the condensation reaction of fatty acid synthesis by the addition to an acyl acceptor of two carbons from malonyl-ACP. Catalyzes the first condensation reaction which initiates fatty acid synthesis and may therefore play a role in governing the total rate of fatty acid production. Possesses both acetoacetyl-ACP synthase and acetyl transacylase activities. Its substrate specificity determines the biosynthesis of branched-chain and/or straight-chain of fatty acids. The polypeptide is Beta-ketoacyl-[acyl-carrier-protein] synthase III (Cupriavidus taiwanensis (strain DSM 17343 / BCRC 17206 / CCUG 44338 / CIP 107171 / LMG 19424 / R1) (Ralstonia taiwanensis (strain LMG 19424))).